Here is a 166-residue protein sequence, read N- to C-terminus: UPF0304 protein VP0990 (166 aa).

It belongs to the UPF0304 family.

The chain is UPF0304 protein VP0990 from Vibrio parahaemolyticus serotype O3:K6 (strain RIMD 2210633).